Here is a 598-residue protein sequence, read N- to C-terminus: uncharacterized protein (598 aa).

Residues aspartate 397, aspartate 408, glutamate 506, and glutamate 520 each coordinate Mn(2+).

The protein belongs to the peptidase M24B family. Mn(2+) serves as cofactor.

This is an uncharacterized protein from Schizosaccharomyces pombe (strain 972 / ATCC 24843) (Fission yeast).